The following is a 189-amino-acid chain: dCTP deaminase (189 aa).

DCTP-binding positions include 112–117 (KSTYAR), 136–138 (TLE), Q157, Y171, and Q181. The Proton donor/acceptor role is filled by E138.

The protein belongs to the dCTP deaminase family. As to quaternary structure, homotrimer.

The catalysed reaction is dCTP + H2O + H(+) = dUTP + NH4(+). The protein operates within pyrimidine metabolism; dUMP biosynthesis; dUMP from dCTP (dUTP route): step 1/2. In terms of biological role, catalyzes the deamination of dCTP to dUTP. The sequence is that of dCTP deaminase from Nitrosospira multiformis (strain ATCC 25196 / NCIMB 11849 / C 71).